A 106-amino-acid polypeptide reads, in one-letter code: Large ribosomal subunit protein uL23 (106 aa).

The protein belongs to the universal ribosomal protein uL23 family. In terms of assembly, part of the 50S ribosomal subunit. Contacts protein L29, and trigger factor when it is bound to the ribosome.

One of the early assembly proteins it binds 23S rRNA. One of the proteins that surrounds the polypeptide exit tunnel on the outside of the ribosome. Forms the main docking site for trigger factor binding to the ribosome. This is Large ribosomal subunit protein uL23 from Neisseria meningitidis serogroup C / serotype 2a (strain ATCC 700532 / DSM 15464 / FAM18).